We begin with the raw amino-acid sequence, 39 residues long: Histone H2A (39 aa).

The segment covering 1–18 (AGRGKQGGKVRAKAKTRS) has biased composition (basic residues). The tract at residues 1–24 (AGRGKQGGKVRAKAKTRSSRAGLQ) is disordered. Lysine 5 bears the N6-(2-hydroxyisobutyryl)lysine mark. Lysine 5 is subject to N6-acetyllysine. Lysine 9 is modified (N6-(2-hydroxyisobutyryl)lysine; alternate). The residue at position 9 (lysine 9) is an N6-lactoyllysine; alternate. N6-succinyllysine is present on lysine 9. Residues lysine 13 and lysine 15 each participate in a glycyl lysine isopeptide (Lys-Gly) (interchain with G-Cter in ubiquitin) cross-link. Lysine 36 carries the N6-(2-hydroxyisobutyryl)lysine; alternate modification.

The protein belongs to the histone H2A family. In terms of assembly, the nucleosome is a histone octamer containing two molecules each of H2A, H2B, H3 and H4 assembled in one H3-H4 heterotetramer and two H2A-H2B heterodimers. The octamer wraps approximately 147 bp of DNA. Post-translationally, monoubiquitination of C-terminus gives a specific tag for epigenetic transcriptional repression. Following DNA double-strand breaks (DSBs), it is ubiquitinated through 'Lys-63' linkage of ubiquitin moieties.

Its subcellular location is the nucleus. It is found in the chromosome. Functionally, core component of nucleosome. Nucleosomes wrap and compact DNA into chromatin, limiting DNA accessibility to the cellular machineries which require DNA as a template. Histones thereby play a central role in transcription regulation, DNA repair, DNA replication and chromosomal stability. DNA accessibility is regulated via a complex set of post-translational modifications of histones, also called histone code, and nucleosome remodeling. Its function is as follows. Buforins are strong antimicrobial activities in vitro against a broad-spectrum of microorganisms including fungi. Buforin II is more potent than buforin I. The chain is Histone H2A from Bufo gargarizans (Asian toad).